The chain runs to 144 residues: Large ribosomal subunit protein uL15 (144 aa).

Residues 1-59 are disordered; sequence MELNNLKPAEGAKHAKRRVGRGIGSGLGKTAGRGHKGQKSRSGGFHKVGFEGGQMPLQR. Over residues 21 to 31 the composition is skewed to gly residues; it reads RGIGSGLGKTA.

This sequence belongs to the universal ribosomal protein uL15 family. In terms of assembly, part of the 50S ribosomal subunit.

In terms of biological role, binds to the 23S rRNA. This is Large ribosomal subunit protein uL15 from Burkholderia thailandensis (strain ATCC 700388 / DSM 13276 / CCUG 48851 / CIP 106301 / E264).